The primary structure comprises 212 residues: Uridine kinase (212 aa).

13–20 (GASASGKS) contributes to the ATP binding site.

This sequence belongs to the uridine kinase family.

The protein localises to the cytoplasm. The enzyme catalyses uridine + ATP = UMP + ADP + H(+). It carries out the reaction cytidine + ATP = CMP + ADP + H(+). It functions in the pathway pyrimidine metabolism; CTP biosynthesis via salvage pathway; CTP from cytidine: step 1/3. Its pathway is pyrimidine metabolism; UMP biosynthesis via salvage pathway; UMP from uridine: step 1/1. The protein is Uridine kinase of Shewanella putrefaciens (strain CN-32 / ATCC BAA-453).